The following is a 1863-amino-acid chain: C-myc promoter-binding protein (1863 aa).

The region spanning 42-200 (KEPITDVSVI…AVYLCYKKSV (159 aa)) is the MABP domain. The 173-residue stretch at 192–364 (VYLCYKKSVA…KVPFPSPQRP (173 aa)) folds into the uDENN domain. Residues 385 to 521 (PLPLSGGKFS…PCKNLMNTLN (137 aa)) form the cDENN domain. Residues 523–641 (LHQQLAKLQQ…CSFVSDKDAS (119 aa)) form the dDENN domain. Serine 731 bears the Phosphoserine mark. PPR repeat units follow at residues 772 to 808 (WFICLPAYVKVCHSKVRALKTAYDVLKKMQSKKMDPP) and 809 to 843 (DEVCYRILMQLCGQYDQPVLAVRVLFEMQKAGIDP). The segment at 905 to 952 (DLGYNSLSKDEVRRGDTSTEDIQEEKDKKGSDCSSLSESESTKGSADC) is disordered. A compositionally biased stretch (basic and acidic residues) spans 912-921 (SKDEVRRGDT). A Bipartite nuclear localization signal motif is present at residues 917-933 (RRGDTSTEDIQEEKDKK). Positions 936–949 (DCSSLSESESTKGS) are enriched in low complexity. A phosphoserine mark is found at serine 1015, serine 1035, serine 1099, serine 1151, and serine 1152. A disordered region spans residues 1075 to 1111 (TRPNTLDIGKPPLRSKRDSLEKESSDDDTPFDGSNYL). Positions 1177 to 1202 (TEQQQKEEEEEDEDDSKSISTPSARR) are disordered. Residues serine 1225, serine 1240, and serine 1251 each carry the phosphoserine modification. 2 disordered regions span residues 1237–1306 (NKKS…SPSF) and 1348–1375 (SKDQSSDRTSLSSVGAQDSESTSLTDED). Basic and acidic residues predominate over residues 1269–1279 (TKSEEKPRDRL). A Phosphoserine modification is found at serine 1281. 2 stretches are compositionally biased toward polar residues: residues 1297-1306 (DTLTHSSPSF) and 1348-1371 (SKDQSSDRTSLSSVGAQDSESTSL). Serine 1508, serine 1587, serine 1589, and serine 1591 each carry phosphoserine.

Expressed ubiquitously. Highest expression in bone marrow, medium in peripheral blood lymphocytes and lowest in spleen. In brain, breast, and prostate, higher expression was seen in normal cells than in tumor cells. Expression is regulated in a growth- and cell cycle-dependent manner.

It is found in the nucleus. Functionally, probable guanine nucleotide exchange factor (GEF) which may activate RAB10. Promotes the exchange of GDP to GTP, converting inactive GDP-bound Rab proteins into their active GTP-bound form. According to PubMed:8056341, it may bind to ISRE-like element (interferon-stimulated response element) of MYC P2 promoter. The polypeptide is C-myc promoter-binding protein (DENND4A) (Homo sapiens (Human)).